The primary structure comprises 295 residues: Secreted frizzled-related protein 2 (295 aa).

The N-terminal stretch at 1–24 (MPRGPASLLLLVLASHCCLGSARG) is a signal peptide. The FZ domain occupies 35–155 (YKRSNCKPIP…PQDNDLCIPL (121 aa)). Intrachain disulfides connect Cys40–Cys103, Cys50–Cys96, Cys87–Cys125, Cys114–Cys152, Cys118–Cys142, Cys172–Cys245, Cys175–Cys247, and Cys190–Cys295. The 124-residue stretch at 172–295 (CEACKTKNED…ISRSIRKLQC (124 aa)) folds into the NTR domain.

It belongs to the secreted frizzled-related protein (sFRP) family. Highly expressed in the eye. Weaker expression in heart and lung.

It localises to the secreted. Its function is as follows. Soluble frizzled-related proteins (sFRPS) function as modulators of Wnt signaling through direct interaction with Wnts. They have a role in regulating cell growth and differentiation in specific cell types. SFRP2 may be important for eye retinal development and for myogenesis. The protein is Secreted frizzled-related protein 2 of Mus musculus (Mouse).